A 420-amino-acid polypeptide reads, in one-letter code: Isocitrate dehydrogenase [NADP] (420 aa).

Residues 75–77 and R82 contribute to the NADP(+) site; that span reads TIT. T77 contacts substrate. Substrate-binding positions include 94–100, R109, and R132; that span reads SPNGTIR. A Mn(2+)-binding site is contributed by D252. K260 contacts NADP(+). D275 contributes to the Mn(2+) binding site. NADP(+)-binding positions include 310–315 and N328; that span reads GTVTRH.

This sequence belongs to the isocitrate and isopropylmalate dehydrogenases family. Mg(2+) is required as a cofactor. The cofactor is Mn(2+).

The catalysed reaction is D-threo-isocitrate + NADP(+) = 2-oxoglutarate + CO2 + NADPH. May function in the production of NADPH for fatty acid and sterol synthesis. This Saccharomyces cerevisiae (strain ATCC 204508 / S288c) (Baker's yeast) protein is Isocitrate dehydrogenase [NADP] (IDP3).